Here is a 588-residue protein sequence, read N- to C-terminus: Calicin (588 aa).

A BTB domain is found at 28–98 (WDMALTVDHH…FYSGKVVISE (71 aa)). Positions 133–235 (CLRYLFLAEL…NAVSNKTLMF (103 aa)) constitute a BACK domain. Residue Ser-149 is modified to Phosphoserine. Kelch repeat units lie at residues 280–327 (SVVI…AAGR), 328–375 (YIYI…TCGG), 377–423 (VYSV…TKGD), 425–475 (NLYI…SFHQ), 476–525 (DNIL…IGDS), and 526–580 (KVFV…LAKL).

In terms of assembly, interacts with CYLC1; the interaction may be relevant for proper acrosome attachment to the nuclear envelope. As to expression, expressed in testis and in spermatozoa.

It is found in the cytoplasm. Its subcellular location is the cytoskeleton. The protein localises to the perinuclear theca. It localises to the calyx. Functionally, required for both nuclear and acrosomal shaping during spermiogenesis. The sequence is that of Calicin (Ccin) from Mus musculus (Mouse).